We begin with the raw amino-acid sequence, 258 residues long: Hydroxypyruvate isomerase (258 aa).

Active-site proton donor/acceptor residues include glutamate 143 and glutamate 240.

The protein belongs to the hyi family. Homodimer.

It catalyses the reaction 3-hydroxypyruvate = 2-hydroxy-3-oxopropanoate. With respect to regulation, not stimulated by addition of pyridoxal 5'-phosphate (0.1 mM), FAD, NAD(+), NADP(+) or ATP (1 mM each). EDTA (10 mM) and metal ions (1 mM) such as Ca(2+), Co(2+), Mg(2+), Ni(2+), Zn(2+) do not affect the enzyme activity. Catalyzes the reversible isomerization between hydroxypyruvate and 2-hydroxy-3-oxopropanoate (also termed tartronate semialdehyde). Does not catalyze the isomerization of D-fructose to D-glucose or that of D-xylulose to D-xylose. Also does not catalyze racemization of serine, alanine, glycerate or lactate. This Escherichia coli (strain K12) protein is Hydroxypyruvate isomerase (hyi).